Consider the following 468-residue polypeptide: ATP synthase subunit beta (468 aa).

An ATP-binding site is contributed by 155-162; it reads GGAGVGKT.

Belongs to the ATPase alpha/beta chains family. F-type ATPases have 2 components, CF(1) - the catalytic core - and CF(0) - the membrane proton channel. CF(1) has five subunits: alpha(3), beta(3), gamma(1), delta(1), epsilon(1). CF(0) has three main subunits: a(1), b(2) and c(9-12). The alpha and beta chains form an alternating ring which encloses part of the gamma chain. CF(1) is attached to CF(0) by a central stalk formed by the gamma and epsilon chains, while a peripheral stalk is formed by the delta and b chains.

The protein resides in the cell membrane. The enzyme catalyses ATP + H2O + 4 H(+)(in) = ADP + phosphate + 5 H(+)(out). Its function is as follows. Produces ATP from ADP in the presence of a proton gradient across the membrane. The catalytic sites are hosted primarily by the beta subunits. This is ATP synthase subunit beta from Streptococcus pneumoniae serotype 19F (strain G54).